Consider the following 77-residue polypeptide: Phytosulfokines 5 (77 aa).

Residues 1–24 form the signal peptide; it reads MVKFTTFLCIIALLLCSTLTHASA. Residues 25–68 constitute a propeptide that is removed on maturation; sequence RLNPTSVYPEENSFKKLEQGEVICEGVGEEECFLIRRTLVAHTD. Tyrosine 69 and tyrosine 71 each carry sulfotyrosine. The propeptide occupies 74-77; that stretch reads NHNP.

The protein belongs to the phytosulfokine family. Sulfation is important for activity and for the binding to a putative membrane receptor. In terms of processing, PSK-beta is an enzymatic derivative of PSK-alpha. Expressed in stems, roots, mature leaves and flowers. Most abundant in vascular bundles.

It localises to the secreted. In terms of biological role, promotes plant cell differentiation, organogenesis and somatic embryogenesis as well as cell proliferation. May be involved in the low quiescent center cell proliferation. The chain is Phytosulfokines 5 (PSK5) from Arabidopsis thaliana (Mouse-ear cress).